The chain runs to 204 residues: Large ribosomal subunit protein uL4 (204 aa).

The segment covering glycine 42–valine 52 has biased composition (polar residues). Residues glycine 42–glycine 70 are disordered.

The protein belongs to the universal ribosomal protein uL4 family. In terms of assembly, part of the 50S ribosomal subunit.

In terms of biological role, one of the primary rRNA binding proteins, this protein initially binds near the 5'-end of the 23S rRNA. It is important during the early stages of 50S assembly. It makes multiple contacts with different domains of the 23S rRNA in the assembled 50S subunit and ribosome. Its function is as follows. Forms part of the polypeptide exit tunnel. This Xylella fastidiosa (strain M12) protein is Large ribosomal subunit protein uL4.